A 602-amino-acid polypeptide reads, in one-letter code: Probable HECT-type ubiquitin ligase-interacting protein creD (602 aa).

2 disordered regions span residues 375-398 (EVDPSGYRTPGPGSGPGTPFGALS) and 457-499 (TADY…MATP). The segment covering 463-475 (PSSGSNSHSPASP) has biased composition (low complexity). The span at 477–492 (LSRRPSDEGYRDHDHI) shows a compositional bias: basic and acidic residues.

The protein belongs to the arrestin family. In terms of assembly, interacts with hulA.

Its function is as follows. Component of the regulatory network controlling carbon source utilization through ubiquitination and deubiquitination involving creA, creB, creC, creD and acrB. May be involved in signaling by recognizing appropriately phosphorylated substrates via its arrestin domains and then recruit a HECT-type ubiquitin ligase such as hulA, leading to ubiquitination of the substrate, providing a link between ubiquitination and phosphorylation in protein regulation and stability. This Aspergillus clavatus (strain ATCC 1007 / CBS 513.65 / DSM 816 / NCTC 3887 / NRRL 1 / QM 1276 / 107) protein is Probable HECT-type ubiquitin ligase-interacting protein creD (creD).